Consider the following 594-residue polypeptide: MKVIEKIQEAAADGRTVFSFEYFPPKTEEGLDNLFERMDRMVAHGPNFCDITWGAGGSTADLTLEIANRMQNMVCVETMMHLTCTNMPVEKIDDALTTIKSNGIQNVLALRGDPPHGQDKFVQVAGGFACALDLVQHIRAKYGDYFGITVAGYPEAHPDAIQSTEGATPEAYSNDLAYLKQKVDAGADLIITQLFYDTDIFLKFVNDCRQIGITCPIVPGIMPINNYKGFLRMTGFCKTKIPAEITAALEPIKDNEEAVKAYGIHLGTEMCKKILATGIKTLHLYTLNMEKSALGILMNLGLIEESKISRSLPWRPPTNVFRVKEDVRPIFWANRPKSYISRTLGWDQYPHGRWGDSRNPSYGALTDYQFTRPRGRGKKLQEEWAVPVKSVEDINERFMNFCQGKLTSSPWSELDGLQPETKIIDDQLVKINQKGFLTINSQPAVNGERSDSTSVGWGGPGGYVYQKAYLEFFCSKEKLDQLIEKSKAFPSLTYIAVNKDGESFSNIPTNAVNAVTWGVFPGKEIVQPTVVDSASFMVWKDEAFEIWSKGWACLFPEGDSSREILDKVQKSYFLVSLVDNDYINGDLFAAFKEI.

The Proton donor/acceptor role is filled by glutamate 21. Residues 21–26 (EYFPPK) and 52–53 (TW) each bind NAD(+). FAD contacts are provided by residues 52–53 (TW), histidine 81, 111–113 (RGD), tyrosine 153, 157–160 (HPDA), aspartate 175, and lysine 182. Position 113 (aspartate 113) interacts with substrate. Glutamine 193 and tyrosine 285 together coordinate substrate.

It belongs to the methylenetetrahydrofolate reductase family. In terms of assembly, homodimer. It depends on FAD as a cofactor.

It catalyses the reaction (6S)-5-methyl-5,6,7,8-tetrahydrofolate + NAD(+) = (6R)-5,10-methylene-5,6,7,8-tetrahydrofolate + NADH + H(+). The protein operates within one-carbon metabolism; tetrahydrofolate interconversion. Plant MTHFRs strongly prefer NADH over NADPH. Not inhibited by methionine or S-adenosylmethionine. In terms of biological role, the probable reversibility of the MTHFR reaction in plants suggests that they can metabolize the methyl group of 5,10-methylenetetrahydrofolate to serine, sugars and starch. The sequence is that of Probable methylenetetrahydrofolate reductase (NADH) from Oryza sativa subsp. japonica (Rice).